The following is a 140-amino-acid chain: Anti-sigma F factor (140 aa).

It belongs to the anti-sigma-factor family.

The enzyme catalyses L-seryl-[protein] + ATP = O-phospho-L-seryl-[protein] + ADP + H(+). It catalyses the reaction L-threonyl-[protein] + ATP = O-phospho-L-threonyl-[protein] + ADP + H(+). In terms of biological role, binds to sigma F and blocks its ability to form an RNA polymerase holoenzyme (E-sigma F). Phosphorylates SpoIIAA on a serine residue. This phosphorylation may enable SpoIIAA to act as an anti-anti-sigma factor that counteracts SpoIIAB and thus releases sigma F from inhibition. The sequence is that of Anti-sigma F factor from Clostridium perfringens (strain SM101 / Type A).